The primary structure comprises 255 residues: Probable iron chelatin transport ATP-binding protein HP_0888 (255 aa).

In terms of domain architecture, ABC transporter spans 3-240; it reads LEVKNLSFKY…HNLSALYDTP (238 aa). Position 35-42 (35-42) interacts with ATP; it reads APNGSGKT.

This sequence belongs to the ABC transporter superfamily.

It is found in the cell inner membrane. Functionally, part of a binding-protein-dependent transport system for an iron chelatin. Probably responsible for energy coupling to the transport system (Potential). The sequence is that of Probable iron chelatin transport ATP-binding protein HP_0888 from Helicobacter pylori (strain ATCC 700392 / 26695) (Campylobacter pylori).